Here is a 322-residue protein sequence, read N- to C-terminus: 4-hydroxythreonine-4-phosphate dehydrogenase (322 aa).

Substrate is bound by residues His131 and Thr132. Positions 161, 206, and 259 each coordinate a divalent metal cation. Substrate is bound by residues Lys267, Asn276, and Arg285.

The protein belongs to the PdxA family. Homodimer. A divalent metal cation serves as cofactor.

It is found in the cytoplasm. It catalyses the reaction 4-(phosphooxy)-L-threonine + NAD(+) = 3-amino-2-oxopropyl phosphate + CO2 + NADH. Its pathway is cofactor biosynthesis; pyridoxine 5'-phosphate biosynthesis; pyridoxine 5'-phosphate from D-erythrose 4-phosphate: step 4/5. In terms of biological role, catalyzes the NAD(P)-dependent oxidation of 4-(phosphooxy)-L-threonine (HTP) into 2-amino-3-oxo-4-(phosphooxy)butyric acid which spontaneously decarboxylates to form 3-amino-2-oxopropyl phosphate (AHAP). This is 4-hydroxythreonine-4-phosphate dehydrogenase from Sulfurihydrogenibium sp. (strain YO3AOP1).